Consider the following 430-residue polypeptide: Ribosomal protein uS12 methylthiotransferase RimO (430 aa).

The MTTase N-terminal domain occupies Met1–Asp116. [4Fe-4S] cluster is bound by residues Cys10, Cys46, Cys79, Cys148, Cys152, and Cys155. In terms of domain architecture, Radical SAM core spans Leu134–Arg365. One can recognise a TRAM domain in the interval Asp367–Ile430.

Belongs to the methylthiotransferase family. RimO subfamily. It depends on [4Fe-4S] cluster as a cofactor.

Its subcellular location is the cytoplasm. It catalyses the reaction L-aspartate(89)-[ribosomal protein uS12]-hydrogen + (sulfur carrier)-SH + AH2 + 2 S-adenosyl-L-methionine = 3-methylsulfanyl-L-aspartate(89)-[ribosomal protein uS12]-hydrogen + (sulfur carrier)-H + 5'-deoxyadenosine + L-methionine + A + S-adenosyl-L-homocysteine + 2 H(+). Its function is as follows. Catalyzes the methylthiolation of an aspartic acid residue of ribosomal protein uS12. The sequence is that of Ribosomal protein uS12 methylthiotransferase RimO from Thermotoga petrophila (strain ATCC BAA-488 / DSM 13995 / JCM 10881 / RKU-1).